Here is a 440-residue protein sequence, read N- to C-terminus: Histidinol dehydrogenase (440 aa).

Residues Tyr139, Gln200, and Asn223 each contribute to the NAD(+) site. Substrate-binding residues include Ser246, Gln268, and His271. The Zn(2+) site is built by Gln268 and His271. Active-site proton acceptor residues include Glu336 and His337. Residues His337, Asp370, Glu424, and His429 each coordinate substrate. Residue Asp370 participates in Zn(2+) binding. His429 contributes to the Zn(2+) binding site.

It belongs to the histidinol dehydrogenase family. Zn(2+) serves as cofactor.

It catalyses the reaction L-histidinol + 2 NAD(+) + H2O = L-histidine + 2 NADH + 3 H(+). It participates in amino-acid biosynthesis; L-histidine biosynthesis; L-histidine from 5-phospho-alpha-D-ribose 1-diphosphate: step 9/9. In terms of biological role, catalyzes the sequential NAD-dependent oxidations of L-histidinol to L-histidinaldehyde and then to L-histidine. The polypeptide is Histidinol dehydrogenase (Bordetella bronchiseptica (strain ATCC BAA-588 / NCTC 13252 / RB50) (Alcaligenes bronchisepticus)).